The chain runs to 264 residues: ATP synthase subunit a (264 aa).

The next 6 membrane-spanning stretches (helical) occupy residues 29 to 49, 87 to 107, 134 to 154, 177 to 197, 208 to 228, and 235 to 255; these read TWHI…LWIF, NALI…MNFM, DLNI…YYSI, IPVN…SLAL, LIFI…SLGV, and LIFH…LTIV.

Belongs to the ATPase A chain family. F-type ATPases have 2 components, CF(1) - the catalytic core - and CF(0) - the membrane proton channel. CF(1) has five subunits: alpha(3), beta(3), gamma(1), delta(1), epsilon(1). CF(0) has three main subunits: a(1), b(2) and c(9-12). The alpha and beta chains form an alternating ring which encloses part of the gamma chain. CF(1) is attached to CF(0) by a central stalk formed by the gamma and epsilon chains, while a peripheral stalk is formed by the delta and b chains.

It localises to the cell inner membrane. Its function is as follows. Key component of the proton channel; it plays a direct role in the translocation of protons across the membrane. This Shewanella amazonensis (strain ATCC BAA-1098 / SB2B) protein is ATP synthase subunit a.